We begin with the raw amino-acid sequence, 657 residues long: Probable serine/threonine-protein kinase CA_C1728 (657 aa).

Residues 10-274 (YKIEEEIGVG…ELSNVKNNYV (265 aa)) form the Protein kinase domain. ATP contacts are provided by residues 16–24 (IGVGGTAVV) and Lys-39. Catalysis depends on Asp-143, which acts as the Proton acceptor. Residues 286–334 (PAQIQNESNPNNKLDNDDTYYNGEPYNKEQPQEEPQEENEEPKNKIKGN) form a disordered region. The segment covering 288–298 (QIQNESNPNNK) has biased composition (polar residues). PASTA domains are found at residues 375 to 441 (SVSK…DISS), 443 to 509 (DTDQ…VISR), and 512 to 577 (EVKK…VIGR). The interval 581–657 (TAVQPPNNNN…TNTPNGTGQK (77 aa)) is disordered. Composition is skewed to low complexity over residues 584-600 (QPPN…QNQN), 613-637 (PTGG…PAGG), and 645-657 (GNVT…TGQK).

The protein belongs to the protein kinase superfamily. Ser/Thr protein kinase family.

The catalysed reaction is L-seryl-[protein] + ATP = O-phospho-L-seryl-[protein] + ADP + H(+). It carries out the reaction L-threonyl-[protein] + ATP = O-phospho-L-threonyl-[protein] + ADP + H(+). The sequence is that of Probable serine/threonine-protein kinase CA_C1728 from Clostridium acetobutylicum (strain ATCC 824 / DSM 792 / JCM 1419 / IAM 19013 / LMG 5710 / NBRC 13948 / NRRL B-527 / VKM B-1787 / 2291 / W).